Here is a 260-residue protein sequence, read N- to C-terminus: Glutathione S-transferase domain-containing protein DDB_G0280881 (260 aa).

A GST N-terminal domain is found at 7 to 96 (KVDFIFYTNG…YLAQKYNTFL (90 aa)). The region spanning 102 to 228 (NPKENSDVIT…QQISEGFKNF (127 aa)) is the GST C-terminal domain.

The protein belongs to the GST superfamily.

The protein is Glutathione S-transferase domain-containing protein DDB_G0280881 of Dictyostelium discoideum (Social amoeba).